A 210-amino-acid polypeptide reads, in one-letter code: Putative 3-methyladenine DNA glycosylase (210 aa).

This sequence belongs to the DNA glycosylase MPG family.

The polypeptide is Putative 3-methyladenine DNA glycosylase (Corynebacterium glutamicum (strain R)).